The chain runs to 213 residues: Putative 3-methyladenine DNA glycosylase (213 aa).

Belongs to the DNA glycosylase MPG family.

This Latilactobacillus sakei subsp. sakei (strain 23K) (Lactobacillus sakei subsp. sakei) protein is Putative 3-methyladenine DNA glycosylase.